The following is a 241-amino-acid chain: Pyridoxal phosphate phosphatase PHOSPHO2 (241 aa).

The Nucleophile role is filled by aspartate 8. Residues aspartate 8 and aspartate 10 each contribute to the Mg(2+) site. The active-site Proton donor is the aspartate 10. Substrate-binding residues include aspartate 19 and aspartate 99. Aspartate 179 is a Mg(2+) binding site.

Belongs to the HAD-like hydrolase superfamily. PHOSPHO family. Requires Mg(2+) as cofactor.

It carries out the reaction pyridoxal 5'-phosphate + H2O = pyridoxal + phosphate. Functionally, phosphatase that has high activity toward pyridoxal 5'-phosphate (PLP). Also active at much lower level toward pyrophosphate, phosphoethanolamine (PEA), phosphocholine (PCho), phospho-l-tyrosine, fructose-6-phosphate, p-nitrophenyl phosphate, and h-glycerophosphate. In Bos taurus (Bovine), this protein is Pyridoxal phosphate phosphatase PHOSPHO2 (PHOSPHO2).